Here is a 454-residue protein sequence, read N- to C-terminus: Bifunctional protein GlmU (454 aa).

The tract at residues 1 to 226 (MSLEIVILAA…AMEVQGVNDR (226 aa)) is pyrophosphorylase. Residues 8–11 (LAAG), Lys22, Gln73, 78–79 (GT), 99–101 (YGD), Gly136, Glu151, Asn166, and Asn224 contribute to the UDP-N-acetyl-alpha-D-glucosamine site. Residue Asp101 coordinates Mg(2+). Asn224 provides a ligand contact to Mg(2+). Positions 227–247 (MQQAQLERHYQRLRAEELMRQ) are linker. The segment at 248–454 (GVTLLDPQRL…NWKRPEKIKK (207 aa)) is N-acetyltransferase. UDP-N-acetyl-alpha-D-glucosamine-binding residues include Arg330 and Lys348. His360 (proton acceptor) is an active-site residue. Positions 363 and 374 each coordinate UDP-N-acetyl-alpha-D-glucosamine. Acetyl-CoA is bound by residues Ala377, 383–384 (NY), Ser402, Ala420, and Arg437.

In the N-terminal section; belongs to the N-acetylglucosamine-1-phosphate uridyltransferase family. It in the C-terminal section; belongs to the transferase hexapeptide repeat family. Homotrimer. It depends on Mg(2+) as a cofactor.

It localises to the cytoplasm. It catalyses the reaction alpha-D-glucosamine 1-phosphate + acetyl-CoA = N-acetyl-alpha-D-glucosamine 1-phosphate + CoA + H(+). The catalysed reaction is N-acetyl-alpha-D-glucosamine 1-phosphate + UTP + H(+) = UDP-N-acetyl-alpha-D-glucosamine + diphosphate. It participates in nucleotide-sugar biosynthesis; UDP-N-acetyl-alpha-D-glucosamine biosynthesis; N-acetyl-alpha-D-glucosamine 1-phosphate from alpha-D-glucosamine 6-phosphate (route II): step 2/2. It functions in the pathway nucleotide-sugar biosynthesis; UDP-N-acetyl-alpha-D-glucosamine biosynthesis; UDP-N-acetyl-alpha-D-glucosamine from N-acetyl-alpha-D-glucosamine 1-phosphate: step 1/1. The protein operates within bacterial outer membrane biogenesis; LPS lipid A biosynthesis. Functionally, catalyzes the last two sequential reactions in the de novo biosynthetic pathway for UDP-N-acetylglucosamine (UDP-GlcNAc). The C-terminal domain catalyzes the transfer of acetyl group from acetyl coenzyme A to glucosamine-1-phosphate (GlcN-1-P) to produce N-acetylglucosamine-1-phosphate (GlcNAc-1-P), which is converted into UDP-GlcNAc by the transfer of uridine 5-monophosphate (from uridine 5-triphosphate), a reaction catalyzed by the N-terminal domain. This is Bifunctional protein GlmU from Pseudomonas aeruginosa (strain ATCC 15692 / DSM 22644 / CIP 104116 / JCM 14847 / LMG 12228 / 1C / PRS 101 / PAO1).